Reading from the N-terminus, the 290-residue chain is UBX domain-containing protein 1-B (290 aa).

The UBA domain occupies 1 to 42 (MADCSALESLIEMGFSPSRAEKALSATGNQGIEPAMDWLVEH). Positions 49–210 (KEPSVVIPED…VQEPPTKKEY (162 aa)) are disordered. Composition is skewed to basic and acidic residues over residues 80–117 (PLTEEEKEKQTKRMMELIAQKQKEREEREKRERIEQEK) and 132–172 (RMQE…DRAR). A coiled-coil region spans residues 81 to 171 (LTEEEKEKQT…KIARDKADRA (91 aa)). Over residues 185–201 (PAETSVPATAPSPSSPV) the composition is skewed to low complexity. The UBX domain occupies 208–287 (KEYDQCRIQV…GLVPTAVLIV (80 aa)).

The protein resides in the cytoplasm. Functionally, component of a complex required to couple deglycosylation and proteasome-mediated degradation of misfolded proteins in the endoplasmic reticulum that are retrotranslocated in the cytosol. Involved in ubiquitin-proteasome systems. The chain is UBX domain-containing protein 1-B (ubxn1-b) from Xenopus laevis (African clawed frog).